A 477-amino-acid polypeptide reads, in one-letter code: Regulatory protein HrpB (477 aa).

The HTH araC/xylS-type domain maps to 375–477; that stretch reads RRAYRYIIEN…NEAPSETIWR (103 aa). DNA-binding regions (H-T-H motif) lie at residues 393–414 and 444–467; these read REVA…KSAV and IIDT…RKQF.

Its function is as follows. Positive regulation of hypersensitive response genes involved in plant pathogenicity and partly of its own synthesis in minimal medium. In Ralstonia nicotianae (strain ATCC BAA-1114 / GMI1000) (Ralstonia solanacearum), this protein is Regulatory protein HrpB (hrpB).